Reading from the N-terminus, the 383-residue chain is MSKKGRVLVAMSGGVDSSVTAVLLKERGYDVVGLTMKTWDYSTSGGRDGKEVGCCSIESMNDARVVATEHGFPHFVVDLREEFGDWVIERFTDEYLSGRTPNPCVLCNTHIKWDALLQRADDLDCEYIATGHYANVRYDDERDRYLLSRGLDRNKDQSYALWGLPQEHLARSIFPLGAYEKPEIREMAAEFGLDNVADKPDSYEICFIPDNDYPRFLKDRVDGLEEEVSGGTFVLSDGTVVGEHDGYPFYTIGQRRGLDLALGERVYVTDIDPETNTITVGPKEELMEQTLTAHEINLVKYPELDGERPAWGTIRYNDDGAGCLAWQPDEDTLKVAFAEPKRAITPGQSLVLYEDEDVLGGGWIHEVGGAENEAAERAAEAPA.

ATP contacts are provided by residues 10–17 and M36; that span reads AMSGGVDS. The active-site Nucleophile is C107. C107 and C206 are disulfide-bonded. Residue G131 participates in ATP binding. The segment at 155–157 is interaction with tRNA; sequence KDQ. C206 serves as the catalytic Cysteine persulfide intermediate. An interaction with tRNA region spans residues 315–316; the sequence is RY.

This sequence belongs to the MnmA/TRMU family.

The protein resides in the cytoplasm. The enzyme catalyses S-sulfanyl-L-cysteinyl-[protein] + uridine(34) in tRNA + AH2 + ATP = 2-thiouridine(34) in tRNA + L-cysteinyl-[protein] + A + AMP + diphosphate + H(+). Functionally, catalyzes the 2-thiolation of uridine at the wobble position (U34) of tRNA, leading to the formation of s(2)U34. In Salinibacter ruber (strain DSM 13855 / M31), this protein is tRNA-specific 2-thiouridylase MnmA.